The following is a 75-amino-acid chain: SPbeta prophage-derived uncharacterized protein YomT (75 aa).

This Bacillus subtilis (strain 168) protein is SPbeta prophage-derived uncharacterized protein YomT (yomT).